The primary structure comprises 263 residues: Receptor expression-enhancing protein 3-A (263 aa).

The next 2 helical transmembrane spans lie at 2–22 (VSWIICKAVVLVFGMLYPAYF) and 35–55 (YVRWMMYWIVFALYTVTEAIA). Disordered regions lie at residues 161-228 (GDET…SMRS) and 240-263 (YASLKHKPKKRPQLYFREDTAHHL). Acidic residues predominate over residues 199–214 (DDNTDEDVEVNSEDEV). Residues 242–251 (SLKHKPKKRP) show a composition bias toward basic residues.

The protein belongs to the DP1 family.

It localises to the endoplasmic reticulum membrane. Microtubule-binding protein required to ensure proper cell division and nuclear envelope reassembly by sequestering the endoplasmic reticulum away from chromosomes during mitosis. Probably acts by clearing the endoplasmic reticulum membrane from metaphase chromosomes. This Xenopus laevis (African clawed frog) protein is Receptor expression-enhancing protein 3-A (reep3-a).